A 302-amino-acid chain; its full sequence is Oxygen-dependent coproporphyrinogen-III oxidase (302 aa).

A substrate-binding site is contributed by Ser-94. A divalent metal cation contacts are provided by His-98 and His-108. His-108 acts as the Proton donor in catalysis. Residue 110–112 (NVR) participates in substrate binding. A divalent metal cation is bound by residues His-147 and His-177. The segment at 242-277 (YVEFNLVWDRGTLFGLQSGGRTESILMSMPPLARWE) is important for dimerization. 260 to 262 (GGR) serves as a coordination point for substrate.

The protein belongs to the aerobic coproporphyrinogen-III oxidase family. In terms of assembly, homodimer. It depends on a divalent metal cation as a cofactor.

The protein localises to the cytoplasm. It carries out the reaction coproporphyrinogen III + O2 + 2 H(+) = protoporphyrinogen IX + 2 CO2 + 2 H2O. It functions in the pathway porphyrin-containing compound metabolism; protoporphyrin-IX biosynthesis; protoporphyrinogen-IX from coproporphyrinogen-III (O2 route): step 1/1. Its function is as follows. Involved in the heme biosynthesis. Catalyzes the aerobic oxidative decarboxylation of propionate groups of rings A and B of coproporphyrinogen-III to yield the vinyl groups in protoporphyrinogen-IX. This Photorhabdus laumondii subsp. laumondii (strain DSM 15139 / CIP 105565 / TT01) (Photorhabdus luminescens subsp. laumondii) protein is Oxygen-dependent coproporphyrinogen-III oxidase.